The sequence spans 132 residues: D-ribose pyranase (132 aa).

His-20 serves as the catalytic Proton donor. Substrate is bound by residues Asp-28, His-99, and 121-123 (YSN).

The protein belongs to the RbsD / FucU family. RbsD subfamily. In terms of assembly, homodecamer.

It localises to the cytoplasm. The catalysed reaction is beta-D-ribopyranose = beta-D-ribofuranose. The protein operates within carbohydrate metabolism; D-ribose degradation; D-ribose 5-phosphate from beta-D-ribopyranose: step 1/2. Catalyzes the interconversion of beta-pyran and beta-furan forms of D-ribose. In Lactococcus lactis subsp. lactis (strain IL1403) (Streptococcus lactis), this protein is D-ribose pyranase.